The chain runs to 808 residues: Bifunctional uridylyltransferase/uridylyl-removing enzyme (808 aa).

The uridylyltransferase stretch occupies residues 1 to 315; that stretch reads MEAESPCAAS…ALVRRPKRRP (315 aa). The uridylyl-removing stretch occupies residues 316-609; sequence LDEGVVEYAG…EISPRDGERI (294 aa). In terms of domain architecture, HD spans 430-544; it reads VDRHVVETAV…LEVLHALSEA (115 aa). 2 ACT domains span residues 610–686 and 730–805; these read DAVI…GMLQ and ILEV…VDEP.

Belongs to the GlnD family. It depends on Mg(2+) as a cofactor.

It carries out the reaction [protein-PII]-L-tyrosine + UTP = [protein-PII]-uridylyl-L-tyrosine + diphosphate. The catalysed reaction is [protein-PII]-uridylyl-L-tyrosine + H2O = [protein-PII]-L-tyrosine + UMP + H(+). Functionally, modifies, by uridylylation and deuridylylation, the PII regulatory protein (GlnB), in response to the nitrogen status of the cell that GlnD senses through the glutamine level. Under low glutamine levels, catalyzes the conversion of the PII protein and UTP to PII-UMP and PPi, while under higher glutamine levels, GlnD hydrolyzes PII-UMP to PII and UMP (deuridylylation). Thus, controls uridylylation state and activity of the PII protein, and plays an important role in the regulation of nitrogen assimilation and metabolism. This chain is Bifunctional uridylyltransferase/uridylyl-removing enzyme, found in Mycobacterium tuberculosis (strain CDC 1551 / Oshkosh).